The chain runs to 341 residues: DNA-directed RNA polymerase subunit alpha (341 aa).

Positions 1 to 233 (MLKDGTSVSN…DLLSPFLHTK (233 aa)) are alpha N-terminal domain (alpha-NTD). Residues 262–341 (SEGDFFKNTF…NEKPRVVGDE (80 aa)) are alpha C-terminal domain (alpha-CTD).

Belongs to the RNA polymerase alpha chain family. As to quaternary structure, in plastids the minimal PEP RNA polymerase catalytic core is composed of four subunits: alpha, beta, beta', and beta''. When a (nuclear-encoded) sigma factor is associated with the core the holoenzyme is formed, which can initiate transcription.

The protein resides in the plastid. It localises to the chloroplast. The enzyme catalyses RNA(n) + a ribonucleoside 5'-triphosphate = RNA(n+1) + diphosphate. Its function is as follows. DNA-dependent RNA polymerase catalyzes the transcription of DNA into RNA using the four ribonucleoside triphosphates as substrates. The sequence is that of DNA-directed RNA polymerase subunit alpha from Marsilea quadrifolia (European water clover).